A 249-amino-acid chain; its full sequence is Ribosomal RNA small subunit methyltransferase G (249 aa).

S-adenosyl-L-methionine contacts are provided by residues Gly88, Phe93, 111–113 (DAT), 139–140 (AE), and Arg158.

This sequence belongs to the methyltransferase superfamily. RNA methyltransferase RsmG family.

It is found in the cytoplasm. In terms of biological role, specifically methylates the N7 position of a guanine in 16S rRNA. This chain is Ribosomal RNA small subunit methyltransferase G, found in Thermus thermophilus (strain ATCC BAA-163 / DSM 7039 / HB27).